A 199-amino-acid chain; its full sequence is Holliday junction branch migration complex subunit RuvA (199 aa).

Residues 1–64 are domain I; that stretch reads MIGRISGLLL…EDGHFLYGFA (64 aa). The domain II stretch occupies residues 65–143; sequence TDEERTAFRQ…KALPQVAGAR (79 aa). The segment at 144-154 is flexible linker; the sequence is LAAVAGGAPDA. A domain III region spans residues 154–199; the sequence is AKSDILNALLALGYNEKEALGAMKGLAEDTGVSDGIRQALKLLSKA.

Belongs to the RuvA family. As to quaternary structure, homotetramer. Forms an RuvA(8)-RuvB(12)-Holliday junction (HJ) complex. HJ DNA is sandwiched between 2 RuvA tetramers; dsDNA enters through RuvA and exits via RuvB. An RuvB hexamer assembles on each DNA strand where it exits the tetramer. Each RuvB hexamer is contacted by two RuvA subunits (via domain III) on 2 adjacent RuvB subunits; this complex drives branch migration. In the full resolvosome a probable DNA-RuvA(4)-RuvB(12)-RuvC(2) complex forms which resolves the HJ.

The protein resides in the cytoplasm. In terms of biological role, the RuvA-RuvB-RuvC complex processes Holliday junction (HJ) DNA during genetic recombination and DNA repair, while the RuvA-RuvB complex plays an important role in the rescue of blocked DNA replication forks via replication fork reversal (RFR). RuvA specifically binds to HJ cruciform DNA, conferring on it an open structure. The RuvB hexamer acts as an ATP-dependent pump, pulling dsDNA into and through the RuvAB complex. HJ branch migration allows RuvC to scan DNA until it finds its consensus sequence, where it cleaves and resolves the cruciform DNA. This chain is Holliday junction branch migration complex subunit RuvA, found in Azoarcus sp. (strain BH72).